Reading from the N-terminus, the 367-residue chain is Ferrochelatase (367 aa).

Positions 213 and 294 each coordinate Fe cation.

The protein belongs to the ferrochelatase family.

It is found in the cytoplasm. It carries out the reaction heme b + 2 H(+) = protoporphyrin IX + Fe(2+). The protein operates within porphyrin-containing compound metabolism; protoheme biosynthesis; protoheme from protoporphyrin-IX: step 1/1. Functionally, catalyzes the ferrous insertion into protoporphyrin IX. In Polaromonas sp. (strain JS666 / ATCC BAA-500), this protein is Ferrochelatase.